The chain runs to 564 residues: Sulfite reductase [NADPH] hemoprotein beta-component 1 (564 aa).

[4Fe-4S] cluster is bound by residues C426, C432, C471, and C475. Residue C475 participates in siroheme binding.

This sequence belongs to the nitrite and sulfite reductase 4Fe-4S domain family. Alpha(8)-beta(8). The alpha component is a flavoprotein, the beta component is a hemoprotein. Requires siroheme as cofactor. It depends on [4Fe-4S] cluster as a cofactor.

It carries out the reaction hydrogen sulfide + 3 NADP(+) + 3 H2O = sulfite + 3 NADPH + 4 H(+). The protein operates within sulfur metabolism; hydrogen sulfide biosynthesis; hydrogen sulfide from sulfite (NADPH route): step 1/1. Its function is as follows. Component of the sulfite reductase complex that catalyzes the 6-electron reduction of sulfite to sulfide. This is one of several activities required for the biosynthesis of L-cysteine from sulfate. In Pectobacterium carotovorum subsp. carotovorum (strain PC1), this protein is Sulfite reductase [NADPH] hemoprotein beta-component 1.